We begin with the raw amino-acid sequence, 640 residues long: LRR receptor kinase SERL2 (640 aa).

The N-terminal stretch at 1-22 (MEPPFFLLLLLLVVSSSSPSAA) is a signal peptide. The Extracellular segment spans residues 23 to 241 (LLSAKGVNNE…AARDRGHKFA (219 aa)). Asn94 and Asn107 each carry an N-linked (GlcNAc...) asparagine glycan. 4 LRR repeats span residues 95 to 119 (LTNL…IGRL), 120 to 143 (ENLK…VGHL), 145 to 167 (SLQY…SANL), and 168 to 191 (SHLV…LART). N-linked (GlcNAc...) asparagine glycosylation is found at Asn153, Asn166, Asn179, and Asn222. A helical transmembrane segment spans residues 242–262 (VAFGSTAGCMGLLLLAAGFLF). Over 263 to 640 (WWRHRRNRQI…VQAVELSGPR (378 aa)) the chain is Cytoplasmic. The 280-residue stretch at 304–583 (FSGKNILGKG…EGDGLADRWE (280 aa)) folds into the Protein kinase domain. ATP is bound by residues 310–318 (LGKGGFGNV) and Lys332. Asp427 acts as the Proton acceptor in catalysis.

It belongs to the protein kinase superfamily. Ser/Thr protein kinase family. As to quaternary structure, interacts with MSBP1.

It localises to the cell membrane. It catalyses the reaction L-seryl-[protein] + ATP = O-phospho-L-seryl-[protein] + ADP + H(+). The catalysed reaction is L-threonyl-[protein] + ATP = O-phospho-L-threonyl-[protein] + ADP + H(+). In terms of biological role, LRR receptor kinase that may be involved in defense response. The sequence is that of LRR receptor kinase SERL2 from Oryza sativa subsp. japonica (Rice).